Consider the following 139-residue polypeptide: Stress-related protein 1 (139 aa).

Positions 1 to 12 (MTSESSTPTGST) are enriched in polar residues. A disordered region spans residues 1-86 (MTSESSTPTG…AERPGSATTP (86 aa)). Composition is skewed to low complexity over residues 14–53 (ALPASITRSSSSTLSTRPSASTPASTGSLTPSTSTASLVV) and 60–74 (SPVVSTRATATTRPR). A Phosphoserine modification is found at Ser60.

In terms of tissue distribution, embryo.

Involved in drought, heat, cold, and/or salt tolerance. This chain is Stress-related protein 1 (SRP1), found in Zea mays (Maize).